Consider the following 400-residue polypeptide: Acetate kinase (400 aa).

N7 contributes to the Mg(2+) binding site. K14 lines the ATP pocket. Substrate is bound at residue R91. D148 (proton donor/acceptor) is an active-site residue. ATP-binding positions include 208 to 212 (HIGNG), 283 to 285 (DFR), and 332 to 336 (GIGEH). E387 contacts Mg(2+).

Belongs to the acetokinase family. Homodimer. Requires Mg(2+) as cofactor. Mn(2+) is required as a cofactor.

It is found in the cytoplasm. It carries out the reaction acetate + ATP = acetyl phosphate + ADP. It functions in the pathway metabolic intermediate biosynthesis; acetyl-CoA biosynthesis; acetyl-CoA from acetate: step 1/2. Its function is as follows. Catalyzes the formation of acetyl phosphate from acetate and ATP. Can also catalyze the reverse reaction. The sequence is that of Acetate kinase from Clostridium beijerinckii (strain ATCC 51743 / NCIMB 8052) (Clostridium acetobutylicum).